The primary structure comprises 188 residues: ATP synthase subunit b (188 aa).

The helical transmembrane segment at 30 to 50 (IVWSLIPFLIILIVFWKLVLP) threads the bilayer.

This sequence belongs to the ATPase B chain family. F-type ATPases have 2 components, F(1) - the catalytic core - and F(0) - the membrane proton channel. F(1) has five subunits: alpha(3), beta(3), gamma(1), delta(1), epsilon(1). F(0) has three main subunits: a(1), b(2) and c(10-14). The alpha and beta chains form an alternating ring which encloses part of the gamma chain. F(1) is attached to F(0) by a central stalk formed by the gamma and epsilon chains, while a peripheral stalk is formed by the delta and b chains.

It localises to the cell membrane. Functionally, f(1)F(0) ATP synthase produces ATP from ADP in the presence of a proton or sodium gradient. F-type ATPases consist of two structural domains, F(1) containing the extramembraneous catalytic core and F(0) containing the membrane proton channel, linked together by a central stalk and a peripheral stalk. During catalysis, ATP synthesis in the catalytic domain of F(1) is coupled via a rotary mechanism of the central stalk subunits to proton translocation. Its function is as follows. Component of the F(0) channel, it forms part of the peripheral stalk, linking F(1) to F(0). This is ATP synthase subunit b from Corynebacterium glutamicum (strain R).